The following is a 446-amino-acid chain: Amino-acid acetyltransferase (446 aa).

Residues Glu299 to Leu431 enclose the N-acetyltransferase domain.

This sequence belongs to the acetyltransferase family. ArgA subfamily.

The protein resides in the cytoplasm. The catalysed reaction is L-glutamate + acetyl-CoA = N-acetyl-L-glutamate + CoA + H(+). Its pathway is amino-acid biosynthesis; L-arginine biosynthesis; N(2)-acetyl-L-ornithine from L-glutamate: step 1/4. The chain is Amino-acid acetyltransferase from Aliivibrio fischeri (strain MJ11) (Vibrio fischeri).